Here is a 98-residue protein sequence, read N- to C-terminus: RNA-binding protein Hfq (98 aa).

The Sm domain maps to 11–71; sequence DVFLNHVRRS…ISTVMPATPV (61 aa).

This sequence belongs to the Hfq family. As to quaternary structure, homohexamer.

Its function is as follows. RNA chaperone that binds small regulatory RNA (sRNAs) and mRNAs to facilitate mRNA translational regulation in response to envelope stress, environmental stress and changes in metabolite concentrations. Also binds with high specificity to tRNAs. This is RNA-binding protein Hfq from Gluconacetobacter diazotrophicus (strain ATCC 49037 / DSM 5601 / CCUG 37298 / CIP 103539 / LMG 7603 / PAl5).